We begin with the raw amino-acid sequence, 311 residues long: Ceroid-lipofuscinosis neuronal protein 6 (311 aa).

Transmembrane regions (helical) follow at residues 56–76 (WVLD…WFPL), 81–101 (VGDY…LKLI), 111–131 (SITY…LVGD), 179–199 (CMWY…CFTA), 204–224 (SLIP…YWYL), 225–245 (VTEG…LALV), and 260–280 (LFLF…VAWL).

In terms of assembly, interacts with CRMP2. Interacts with CLN5. Interacts with CLN3.

The protein resides in the endoplasmic reticulum membrane. Its subcellular location is the endoplasmic reticulum. The chain is Ceroid-lipofuscinosis neuronal protein 6 (CLN6) from Homo sapiens (Human).